The chain runs to 73 residues: Large ribosomal subunit protein bL31 (73 aa).

Zn(2+) contacts are provided by Cys-16, Cys-18, Cys-37, and Cys-40.

This sequence belongs to the bacterial ribosomal protein bL31 family. Type A subfamily. In terms of assembly, part of the 50S ribosomal subunit. Zn(2+) serves as cofactor.

Binds the 23S rRNA. The chain is Large ribosomal subunit protein bL31 from Pseudomonas savastanoi pv. phaseolicola (strain 1448A / Race 6) (Pseudomonas syringae pv. phaseolicola (strain 1448A / Race 6)).